We begin with the raw amino-acid sequence, 483 residues long: Glycogen synthase (483 aa).

Lys15 is a binding site for ADP-alpha-D-glucose.

It belongs to the glycosyltransferase 1 family. Bacterial/plant glycogen synthase subfamily.

It carries out the reaction [(1-&gt;4)-alpha-D-glucosyl](n) + ADP-alpha-D-glucose = [(1-&gt;4)-alpha-D-glucosyl](n+1) + ADP + H(+). The protein operates within glycan biosynthesis; glycogen biosynthesis. In terms of biological role, synthesizes alpha-1,4-glucan chains using ADP-glucose. The protein is Glycogen synthase of Desulfatibacillum aliphaticivorans.